The primary structure comprises 623 residues: Mu-like prophage FluMu defective tail fiber protein (623 aa).

This sequence to phage Mu protein S.

This is Mu-like prophage FluMu defective tail fiber protein from Haemophilus influenzae (strain ATCC 51907 / DSM 11121 / KW20 / Rd).